We begin with the raw amino-acid sequence, 392 residues long: 26S proteasome regulatory subunit 8 homolog (392 aa).

176–183 (GPPGTGKT) is an ATP binding site.

It belongs to the AAA ATPase family. The 26S proteasome consists of a 20S proteasome core and two 19S regulatory subunits. The 20S proteasome core is composed of 28 subunits that are arranged in four stacked rings, resulting in a barrel-shaped structure. The two end rings are each formed by seven alpha subunits, and the two central rings are each formed by seven beta subunits. The catalytic chamber with the active sites is on the inside of the barrel.

The protein localises to the cytoplasm. Its subcellular location is the nucleus. In terms of biological role, acts as a regulatory subunit of the 26S proteasome which degrades poly-ubiquitinated proteins in the cytoplasm and in the nucleus. It is essential for the regulated turnover of proteins and for the removal of misfolded proteins. The proteasome is a multicatalytic proteinase complex that is characterized by its ability to cleave peptides with Arg, Phe, Tyr, Leu, and Glu adjacent to the leaving group at neutral or slightly basic pH. The protein is 26S proteasome regulatory subunit 8 homolog (RPT6) of Encephalitozoon cuniculi (strain GB-M1) (Microsporidian parasite).